The following is a 64-amino-acid chain: Prokaryotic ubiquitin-like protein Pup (64 aa).

Residues M1 to D37 are disordered. The ARC ATPase binding stretch occupies residues S21 to Y58. The stretch at A23–E52 forms a coiled coil. The residue at position 64 (Q64) is a Deamidated glutamine. Q64 participates in a covalent cross-link: Isoglutamyl lysine isopeptide (Gln-Lys) (interchain with K-? in acceptor proteins).

The protein belongs to the prokaryotic ubiquitin-like protein family. In terms of assembly, strongly interacts with the proteasome-associated ATPase ARC through a hydrophobic interface; the interacting region of Pup lies in its C-terminal half. There is one Pup binding site per ARC hexamer ring. Post-translationally, is modified by deamidation of its C-terminal glutamine to glutamate by the deamidase Dop, a prerequisite to the subsequent pupylation process.

Its pathway is protein degradation; proteasomal Pup-dependent pathway. Protein modifier that is covalently attached to lysine residues of substrate proteins, thereby targeting them for proteasomal degradation. The tagging system is termed pupylation. This Mycolicibacterium vanbaalenii (strain DSM 7251 / JCM 13017 / BCRC 16820 / KCTC 9966 / NRRL B-24157 / PYR-1) (Mycobacterium vanbaalenii) protein is Prokaryotic ubiquitin-like protein Pup.